Consider the following 996-residue polypeptide: Leucine-rich repeat receptor-like kinase protein THICK TASSEL DWARF1 (996 aa).

Positions 1-26 (MPPPTFLLGLLLLLLLAAAAPAPASA) are cleaved as a signal peptide. 21 LRR repeats span residues 78–103 (TSRV…VALL), 104–127 (DALA…LASM), 128–151 (PALR…PPAA), 153–178 (FPAL…APHA), 180–201 (SLRY…TFGD), 202–226 (LAAL…LSRL), 251–275 (LQSL…LARL), 276–299 (SRLD…LGAL), 300–323 (TSLR…FAAL), 325–349 (NLKL…DFPF), 351–371 (EVLQ…LGRN), 372–395 (GRLK…LCAG), 397–419 (NLQL…LGDC), 420–443 (KTLT…LFDL), 445–466 (QANM…VIAG), 467–490 (DKIG…IGNL), 491–514 (PALQ…IGRL), 516–538 (NLTR…LMGC), 539–562 (ASLG…VTSL), 563–586 (KILC…MANM), and 587–611 (TSLT…QFLV). The helical transmembrane segment at 646–666 (KKLLVWLVVLLTLLVLAVLGA) threads the bilayer. The Protein kinase domain occupies 703 to 978 (LKEDNIIGKG…TMREVVHMLS (276 aa)). Residues 709–717 (IGKGGAGIV) and Lys731 each bind ATP. The active-site Proton acceptor is Asp828.

It belongs to the protein kinase superfamily. Ser/Thr protein kinase family. Highly expressed in the apex of the vegetative seedlings. Lower expression in young leaves, ears and tassels, embryos and roots. Not expressed in the shoot meristem itself. Detected in the three outermost layers of the inflorescence meristem, and on its flanks at positions of prospective spikelet pair meristems. Not confined to meristematic cells but also detected in primordia of glumes, lemmas and stamens.

It localises to the membrane. The enzyme catalyses L-seryl-[protein] + ATP = O-phospho-L-seryl-[protein] + ADP + H(+). It carries out the reaction L-threonyl-[protein] + ATP = O-phospho-L-threonyl-[protein] + ADP + H(+). Receptor-like kinase protein that regulates meristem size during inflorescence and flower development. Promotes vegetative meristem growth and restricts inflorescence and floral meristem growth. Based on additive and synergistic phenotypes of double mutants, it is probable that unlike CLV1 and CLV2 in A.thaliana, TD1 and FAE2 do not function exclusively in a single pathway. However, KN-1 and TD1 do function in a linear pathway to maintain vegetative meristem homeostasis, but they may interact with different partners during development. The chain is Leucine-rich repeat receptor-like kinase protein THICK TASSEL DWARF1 (TD1) from Zea mays (Maize).